The primary structure comprises 1172 residues: DNA-directed RNA polymerase subunit beta (1172 aa).

It belongs to the RNA polymerase beta chain family. As to quaternary structure, the RNAP catalytic core consists of 2 alpha, 1 beta, 1 beta' and 1 omega subunit. When a sigma factor is associated with the core the holoenzyme is formed, which can initiate transcription.

The enzyme catalyses RNA(n) + a ribonucleoside 5'-triphosphate = RNA(n+1) + diphosphate. Functionally, DNA-dependent RNA polymerase catalyzes the transcription of DNA into RNA using the four ribonucleoside triphosphates as substrates. The sequence is that of DNA-directed RNA polymerase subunit beta from Thermosipho melanesiensis (strain DSM 12029 / CIP 104789 / BI429).